A 328-amino-acid polypeptide reads, in one-letter code: Biotin synthase (328 aa).

Residues 48–278 form the Radical SAM core domain; that stretch reads FTGNSASLCS…GKSLSVCGGR (231 aa). [4Fe-4S] cluster contacts are provided by C66, C70, and C73. [2Fe-2S] cluster-binding residues include S143 and C203.

It belongs to the radical SAM superfamily. Biotin synthase family. In terms of assembly, homodimer. [4Fe-4S] cluster is required as a cofactor. Requires [2Fe-2S] cluster as cofactor.

The enzyme catalyses (4R,5S)-dethiobiotin + (sulfur carrier)-SH + 2 reduced [2Fe-2S]-[ferredoxin] + 2 S-adenosyl-L-methionine = (sulfur carrier)-H + biotin + 2 5'-deoxyadenosine + 2 L-methionine + 2 oxidized [2Fe-2S]-[ferredoxin]. The protein operates within cofactor biosynthesis; biotin biosynthesis; biotin from 7,8-diaminononanoate: step 2/2. In terms of biological role, catalyzes the conversion of dethiobiotin (DTB) to biotin by the insertion of a sulfur atom into dethiobiotin via a radical-based mechanism. The polypeptide is Biotin synthase (Pelobacter propionicus (strain DSM 2379 / NBRC 103807 / OttBd1)).